We begin with the raw amino-acid sequence, 224 residues long: Probable GTP-binding protein EngB (224 aa).

Positions 31–205 (IGVEIAFAGR…LSILNDWCHP (175 aa)) constitute an EngB-type G domain. GTP contacts are provided by residues 39–46 (GRSNAGKS), 66–70 (GRTQL), 84–87 (DLPG), 151–154 (TKSD), and 184–186 (LSS). Positions 46 and 68 each coordinate Mg(2+).

The protein belongs to the TRAFAC class TrmE-Era-EngA-EngB-Septin-like GTPase superfamily. EngB GTPase family. Requires Mg(2+) as cofactor.

Functionally, necessary for normal cell division and for the maintenance of normal septation. This chain is Probable GTP-binding protein EngB, found in Shewanella frigidimarina (strain NCIMB 400).